The chain runs to 98 residues: Small ribosomal subunit protein eS24 (98 aa).

Belongs to the eukaryotic ribosomal protein eS24 family.

The polypeptide is Small ribosomal subunit protein eS24 (rps2e) (Thermoplasma acidophilum (strain ATCC 25905 / DSM 1728 / JCM 9062 / NBRC 15155 / AMRC-C165)).